The primary structure comprises 315 residues: Porphobilinogen deaminase (315 aa).

At C242 the chain carries S-(dipyrrolylmethanemethyl)cysteine.

Belongs to the HMBS family. Monomer. Dipyrromethane is required as a cofactor.

It carries out the reaction 4 porphobilinogen + H2O = hydroxymethylbilane + 4 NH4(+). It participates in porphyrin-containing compound metabolism; protoporphyrin-IX biosynthesis; coproporphyrinogen-III from 5-aminolevulinate: step 2/4. Functionally, tetrapolymerization of the monopyrrole PBG into the hydroxymethylbilane pre-uroporphyrinogen in several discrete steps. The chain is Porphobilinogen deaminase from Syntrophotalea carbinolica (strain DSM 2380 / NBRC 103641 / GraBd1) (Pelobacter carbinolicus).